The sequence spans 2768 residues: Thyroglobulin (2768 aa).

The signal sequence occupies residues 1 to 19; it reads MALVLEIFTLLASICWVSA. Position 24 is an iodotyrosine; alternate (tyrosine 24). A Sulfotyrosine; alternate modification is found at tyrosine 24. Tyrosine 24 is modified (thyroxine; alternate). Tyrosine 24 carries the triiodothyronine; alternate modification. 4 consecutive Thyroglobulin type-1 domains span residues 31-92, 93-160, 161-297, and 298-358; these read LRPC…PVAC, LSFC…PKRC, PRSC…RFRC, and PTKC…PPSC. Intrachain disulfides connect cysteine 34-cysteine 52, cysteine 63-cysteine 70, cysteine 72-cysteine 92, cysteine 96-cysteine 120, cysteine 131-cysteine 138, cysteine 140-cysteine 160, cysteine 164-cysteine 183, cysteine 194-cysteine 235, cysteine 237-cysteine 297, cysteine 301-cysteine 319, cysteine 330-cysteine 336, cysteine 338-cysteine 358, cysteine 364-cysteine 620, cysteine 408-cysteine 608, cysteine 631-cysteine 636, cysteine 638-cysteine 658, cysteine 662-cysteine 687, and cysteine 698-cysteine 703. An N-linked (GlcNAc...) asparagine glycan is attached at asparagine 76. Residue tyrosine 108 is modified to Iodotyrosine. N-linked (GlcNAc...) asparagine glycosylation occurs at asparagine 110. Tyrosine 149 is modified (iodotyrosine; alternate). Diiodotyrosine; alternate is present on tyrosine 149. N-linked (GlcNAc...) asparagine glycosylation is present at asparagine 198. Iodotyrosine is present on residues tyrosine 234 and tyrosine 258. 2 N-linked (GlcNAc...) asparagine glycosylation sites follow: asparagine 484 and asparagine 529. A disordered region spans residues 521–545; that stretch reads PLSVGLDSNSSTGTPEAAKKDGTMN. 6 Thyroglobulin type-1 domains span residues 605–658, 659–726, 727–921, 922–1073, 1074–1145, and 1146–1210; these read SQTC…QPRC, PTDC…PKKC, PTPC…LPTC, PGSC…IPQC, PTTC…SAQC, and PSLC…QPAC. Iodotyrosine; alternate is present on tyrosine 704. Position 704 is a thyroxine; alternate (tyrosine 704). Triiodothyronine; alternate is present on tyrosine 704. A Diiodotyrosine; alternate modification is found at tyrosine 704. Intrachain disulfides connect cysteine 705-cysteine 726, cysteine 730-cysteine 763, cysteine 774-cysteine 898, cysteine 900-cysteine 921, cysteine 925-cysteine 1031, cysteine 1042-cysteine 1049, cysteine 1051-cysteine 1073, cysteine 1077-cysteine 1108, cysteine 1126-cysteine 1145, cysteine 1149-cysteine 1169, cysteine 1181-cysteine 1188, cysteine 1190-cysteine 1210, cysteine 1215-cysteine 1264, cysteine 1231-cysteine 1245, cysteine 1306-cysteine 1356, and cysteine 1331-cysteine 1347. A glycan (N-linked (GlcNAc...) asparagine) is linked at asparagine 748. Tyrosine 785 bears the Iodotyrosine mark. Residue asparagine 816 is glycosylated (N-linked (GlcNAc...) asparagine). Residue tyrosine 866 is modified to Iodotyrosine; alternate. Tyrosine 866 carries the diiodotyrosine; alternate modification. Tyrosine 883 bears the Diiodotyrosine mark. Asparagine 947 is a glycosylation site (N-linked (GlcNAc...) asparagine). Tyrosine 992 bears the Iodotyrosine; alternate mark. Tyrosine 992 is subject to Diiodotyrosine; alternate. Residue asparagine 1220 is glycosylated (N-linked (GlcNAc...) asparagine). The residue at position 1310 (tyrosine 1310) is an Iodotyrosine. Tyrosine 1310 bears the Thyroxine mark. N-linked (GlcNAc...) asparagine glycans are attached at residues asparagine 1348, asparagine 1349, and asparagine 1365. 9 disulfides stabilise this stretch: cysteine 1440–cysteine 1459, cysteine 1462–cysteine 1473, cysteine 1476–cysteine 1490, cysteine 1493–cysteine 1510, cysteine 1514–cysteine 1523, cysteine 1543–cysteine 1565, cysteine 1603–cysteine 1627, cysteine 1607–cysteine 1613, and cysteine 1639–cysteine 1662. Type II repeat units follow at residues 1456–1469, 1470–1486, and 1487–1503; these read GLGC…SYSQ, DEEC…EQAG, and SLAC…ISAG. Tyrosine 1467 bears the Iodotyrosine; alternate mark. Tyrosine 1467 carries the diiodotyrosine; alternate modification. Residues 1511-1565 form the Thyroglobulin type-1 11 domain; the sequence is VTDCQRNEAGLQCDQNGQYRASQKDRGSGKAFCVDGEGRRLPWWETEAPLEDSQC. The Type IIIA repeat unit spans residues 1603–1723; the sequence is CLTDCTEDEA…GANLTDAHLF (121 aa). Asparagine 1716 carries N-linked (GlcNAc...) asparagine glycosylation. 4 disulfide bridges follow: cysteine 1724–cysteine 1749, cysteine 1728–cysteine 1734, cysteine 1733–cysteine 1835, and cysteine 1760–cysteine 1777. One copy of the Type IIIB repeat lies at 1724 to 1892; it reads CLLACDRDLC…LFSAQQANLW (169 aa). Residues asparagine 1774 and asparagine 1869 are each glycosylated (N-linked (GlcNAc...) asparagine). 7 disulfide bridges follow: cysteine 1893–cysteine 1919, cysteine 1897–cysteine 1904, cysteine 1928–cysteine 1939, cysteine 1996–cysteine 2024, cysteine 2000–cysteine 2006, cysteine 2005–cysteine 2076, and cysteine 2035–cysteine 2048. Residues 1893 to 1995 form a Type IIIA repeat; the sequence is CLSRCVQEHS…EKSISNGFFE (103 aa). One copy of the Type IIIB repeat lies at 1996–2129; the sequence is CERRCDADPC…TSNFSAVRDL (134 aa). N-linked (GlcNAc...) asparagine glycosylation is present at asparagine 2013. N-linked (GlcNAc...) asparagine glycosylation occurs at asparagine 2122. 3 disulfides stabilise this stretch: cysteine 2130–cysteine 2154, cysteine 2134–cysteine 2140, and cysteine 2163–cysteine 2172. Residues 2130-2187 form a Type IIIA repeat; it reads CLSECSQHEACLITTLQTQPGAVRCMFYADTQSCTHSLQGQNCRLLLREEATHIYRKP. Residue tyrosine 2184 is modified to Iodotyrosine. The segment at 2188-2768 is cholinesterase-like (ChEL); the sequence is GISLLSYEAS…QEPGSKTYSK (581 aa). N-linked (GlcNAc...) asparagine glycosylation occurs at asparagine 2250. An intrachain disulfide couples cysteine 2264 to cysteine 2281. N-linked (GlcNAc...) asparagine glycosylation occurs at asparagine 2295. The cysteines at positions 2442 and 2453 are disulfide-linked. Tyrosine 2540 carries the iodotyrosine modification. Position 2573 is an iodotyrosine; alternate (tyrosine 2573). Thyroxine; alternate is present on tyrosine 2573. Tyrosine 2573 carries the triiodothyronine; alternate modification. At tyrosine 2573 the chain carries Diiodotyrosine; alternate. Asparagine 2582 carries N-linked (GlcNAc...) asparagine glycosylation. 2 positions are modified to iodotyrosine: tyrosine 2587 and tyrosine 2617. The cysteines at positions 2591 and 2715 are disulfide-linked. Tyrosine 2697 is subject to Diiodotyrosine. A disordered region spans residues 2727–2768; it reads TSADGAKGGQSAESEEEELTAGSGLREDLLSLQEPGSKTYSK. An O-linked (Xyl...) (chondroitin sulfate) serine glycan is attached at serine 2749. Position 2766 is an iodotyrosine; alternate (tyrosine 2766). At tyrosine 2766 the chain carries Thyroxine; alternate. Tyrosine 2766 bears the Triiodothyronine; alternate mark. Diiodotyrosine; alternate is present on tyrosine 2766.

The protein belongs to the type-B carboxylesterase/lipase family. In terms of assembly, monomer. Homodimer (via ChEL region); occurs in the endoplasmic reticulum and is required for export to the Golgi apparatus. Homooligomer; disulfide-linked; stored in this form in the thyroid follicle lumen. Post-translationally, iodinated on tyrosine residues by TPO. There are 4 pairs of iodinated tyrosines used for coupling: acceptor Tyr-24 is coupled to donor Tyr-149 or Tyr-234, acceptor Tyr-2573 is coupled to donor Tyr-2540, acceptor Tyr-2766 in monomer 1 is coupled to donor Tyr-2766 in monomer 2 and acceptor Tyr-1310 in monomer 1 is coupled to donor Tyr-108 in monomer 2. In terms of processing, sulfated tyrosines are desulfated during iodination. Undergoes sequential proteolysis by cathepsins to release thyroxine (T4) and triiodothyronine (T3) hormones. In the thyroid follicle lumen, cross-linked TG (storage form) is solubilized by limited proteolysis mediated by cathepsins CTSB and/or CTSL. Partially cleaved TG is further processed by CTSK/cathepsin K and/or CTSL resulting in the release of T4. Following endocytosis, further processing occurs leading to the release of T3 and more T4 hormones. In terms of tissue distribution, specifically expressed in the thyroid gland.

It localises to the secreted. In terms of biological role, acts as a substrate for the production of iodinated thyroid hormones thyroxine (T4) and triiodothyronine (T3). The synthesis of T3 and T4 involves iodination of selected tyrosine residues of TG/thyroglobulin followed by their oxidative coupling in the thyroid follicle lumen. Following TG re-internalization and lysosomal-mediated proteolysis, T3 and T4 are released from the polypeptide backbone leading to their secretion into the bloodstream. One dimer produces 7 thyroid hormone molecules. This Homo sapiens (Human) protein is Thyroglobulin.